Reading from the N-terminus, the 373-residue chain is MAKRDYYEVLGVAKNASDEDLKKAYRKLAMKYHPDRNPDSKEAEEKFKEAKEAYEVLGDEQKRAAYDRYGHAGVDPNAAGMGGGMGGGFADAFGDIFGEIFGAGRRGGGGPQVYRGADLKYALEITLEQAASGFDTEIRVPSWENCDTCHGSGAKAGTSPKTCRTCGGSGAVRMQQGFFSVQQTCPTCHGTGKEITDPCPSCDGVGRTRRNKTLQVKIPAGIDDGMRIRSSGNGEPGINGGPPGDLYVEIHIKQHKIFQRDGDDLHCELTIPFTTAALGGELQVPTLGGKAEISIPEGTQSGKTFRLRAKGIRGVRGSYPGDLYCHVVVETPVRLSDEQKAILRQFEASLNDGGDRHSPQSKSWTDRVKEFFS.

Residues 5 to 70 (DYYEVLGVAK…QKRAAYDRYG (66 aa)) enclose the J domain. The CR-type zinc-finger motif lies at 133–211 (GFDTEIRVPS…CDGVGRTRRN (79 aa)). Positions 146, 149, 163, 166, 185, 188, 199, and 202 each coordinate Zn(2+). 4 CXXCXGXG motif repeats span residues 146–153 (CDTCHGSG), 163–170 (CRTCGGSG), 185–192 (CPTCHGTG), and 199–206 (CPSCDGVG).

This sequence belongs to the DnaJ family. Homodimer. It depends on Zn(2+) as a cofactor.

The protein resides in the cytoplasm. Participates actively in the response to hyperosmotic and heat shock by preventing the aggregation of stress-denatured proteins and by disaggregating proteins, also in an autonomous, DnaK-independent fashion. Unfolded proteins bind initially to DnaJ; upon interaction with the DnaJ-bound protein, DnaK hydrolyzes its bound ATP, resulting in the formation of a stable complex. GrpE releases ADP from DnaK; ATP binding to DnaK triggers the release of the substrate protein, thus completing the reaction cycle. Several rounds of ATP-dependent interactions between DnaJ, DnaK and GrpE are required for fully efficient folding. Also involved, together with DnaK and GrpE, in the DNA replication of plasmids through activation of initiation proteins. The sequence is that of Chaperone protein DnaJ from Bordetella bronchiseptica (strain ATCC BAA-588 / NCTC 13252 / RB50) (Alcaligenes bronchisepticus).